We begin with the raw amino-acid sequence, 71 residues long: Protein translocase subunit SecE (71 aa).

Residues 43-63 form a helical membrane-spanning segment; that stretch reads VAGAGILAVGAIGFIIYVLLT.

Belongs to the SecE/SEC61-gamma family. In terms of assembly, component of the Sec protein translocase complex. Heterotrimer consisting of SecY (alpha), SecG (beta) and SecE (gamma) subunits. The heterotrimers can form oligomers, although 1 heterotrimer is thought to be able to translocate proteins. Interacts with the ribosome. May interact with SecDF, and other proteins may be involved.

The protein localises to the cell membrane. Its function is as follows. Essential subunit of the Sec protein translocation channel SecYEG. Clamps together the 2 halves of SecY. May contact the channel plug during translocation. In Methanosarcina acetivorans (strain ATCC 35395 / DSM 2834 / JCM 12185 / C2A), this protein is Protein translocase subunit SecE.